We begin with the raw amino-acid sequence, 137 residues long: Profilin-3 (137 aa).

This sequence belongs to the profilin family. Interacts with ACTRT3. Detected in round spermatids.

The protein resides in the cytoplasm. It is found in the cytoskeleton. It localises to the nucleus. Functionally, binds to actin and affects the structure of the cytoskeleton. Slightly reduces actin polymerization. Binds to poly-L-proline, phosphatidylinositol 3-phosphate (PtdIns(3)P), phosphatidylinositol 4,5-bisphosphate (PtdIns(4,5)P2), and phosphatidylinositol 4-phosphate (PtdIns(4)P). May be involved in spermatogenesis. This is Profilin-3 (Pfn3) from Rattus norvegicus (Rat).